The primary structure comprises 200 residues: ATP-dependent Clp protease proteolytic subunit (200 aa).

The Nucleophile role is filled by Ser103. The active site involves His128.

It belongs to the peptidase S14 family. As to quaternary structure, fourteen ClpP subunits assemble into 2 heptameric rings which stack back to back to give a disk-like structure with a central cavity, resembling the structure of eukaryotic proteasomes.

It localises to the cytoplasm. The enzyme catalyses Hydrolysis of proteins to small peptides in the presence of ATP and magnesium. alpha-casein is the usual test substrate. In the absence of ATP, only oligopeptides shorter than five residues are hydrolyzed (such as succinyl-Leu-Tyr-|-NHMec, and Leu-Tyr-Leu-|-Tyr-Trp, in which cleavage of the -Tyr-|-Leu- and -Tyr-|-Trp bonds also occurs).. Cleaves peptides in various proteins in a process that requires ATP hydrolysis. Has a chymotrypsin-like activity. Plays a major role in the degradation of misfolded proteins. This chain is ATP-dependent Clp protease proteolytic subunit, found in Vibrio parahaemolyticus serotype O3:K6 (strain RIMD 2210633).